The primary structure comprises 208 residues: UPF0711 protein C18orf21 homolog (208 aa).

Over residues serine 123–threonine 137 the composition is skewed to basic residues. 2 disordered regions span residues serine 123–proline 180 and methionine 189–leucine 208. A compositionally biased stretch (polar residues) spans proline 138–arginine 152. Residues threonine 153–proline 180 show a composition bias toward low complexity.

It belongs to the UPF0711 family.

In Danio rerio (Zebrafish), this protein is UPF0711 protein C18orf21 homolog.